The following is a 230-amino-acid chain: ATP synthase subunit a (230 aa).

A run of 5 helical transmembrane segments spans residues 17 to 37, 78 to 98, 107 to 127, 165 to 187, and 198 to 218; these read LPIT…FIMA, IFPF…IGVI, DLSV…WFGI, LFGN…GFLV, and EAII…AGGI.

Belongs to the ATPase A chain family. As to quaternary structure, F-type ATPases have 2 components, CF(1) - the catalytic core - and CF(0) - the membrane proton channel. CF(1) has five subunits: alpha(3), beta(3), gamma(1), delta(1), epsilon(1). CF(0) has three main subunits: a(1), b(2) and c(9-12). The alpha and beta chains form an alternating ring which encloses part of the gamma chain. CF(1) is attached to CF(0) by a central stalk formed by the gamma and epsilon chains, while a peripheral stalk is formed by the delta and b chains.

The protein localises to the cell inner membrane. Key component of the proton channel; it plays a direct role in the translocation of protons across the membrane. The polypeptide is ATP synthase subunit a (Legionella pneumophila (strain Corby)).